Reading from the N-terminus, the 168-residue chain is N-alpha-acetyltransferase (168 aa).

Residues 13–168 (YQIRLATLSD…EDAYLMAAPL (156 aa)) enclose the N-acetyltransferase domain. Residue Tyr-38 coordinates substrate. Position 89 (His-89) interacts with Zn(2+). Residues 93–95 (IAV) and 101–106 (KIGVGT) contribute to the acetyl-CoA site. Residues 93 to 95 (IAV) and 101 to 106 (KIGVGT) contribute to the CoA site. Zn(2+) is bound at residue Glu-128. Acetyl-CoA is bound by residues Asn-133 and 140 to 142 (YKK). A CoA-binding site is contributed by Asn-133. Tyr-155 contributes to the substrate binding site.

Belongs to the acetyltransferase family. ARD1 subfamily. Homodimer.

It is found in the cytoplasm. The enzyme catalyses N-terminal L-alanyl-[protein] + acetyl-CoA = N-terminal N(alpha)-acetyl-L-alanyl-[protein] + CoA + H(+). It catalyses the reaction N-terminal L-seryl-[protein] + acetyl-CoA = N-terminal N(alpha)-acetyl-L-seryl-[protein] + CoA + H(+). It carries out the reaction N-terminal L-methionyl-L-leucyl-[protein] + acetyl-CoA = N-terminal N(alpha)-acetyl-L-methionyl-L-leucyl-[protein] + CoA + H(+). The catalysed reaction is N-terminal L-methionyl-L-glutamyl-[protein] + acetyl-CoA = N-terminal N(alpha)-acetyl-L-methionyl-L-glutamyl-[protein] + CoA + H(+). In terms of biological role, displays alpha (N-terminal) acetyltransferase activity. Catalyzes the covalent attachment of an acetyl moiety from acetyl-CoA to the free alpha-amino group at the N-terminus of a protein. This Sulfolobus acidocaldarius (strain ATCC 33909 / DSM 639 / JCM 8929 / NBRC 15157 / NCIMB 11770) protein is N-alpha-acetyltransferase.